Reading from the N-terminus, the 197-residue chain is Holliday junction branch migration complex subunit RuvA (197 aa).

The tract at residues 1-63 (MYAYLKGIIT…EDAHLLYGFR (63 aa)) is domain I. Residues 64–142 (SEDEKKLFLS…VAGDDLPAKV (79 aa)) are domain II. The flexible linker stretch occupies residues 143–147 (AVQAS). The tract at residues 148–197 (AENQELEEAMEAMLALGYKATELKKIKKFFEGTTDTAENYIKSALKMLVK) is domain III.

This sequence belongs to the RuvA family. Homotetramer. Forms an RuvA(8)-RuvB(12)-Holliday junction (HJ) complex. HJ DNA is sandwiched between 2 RuvA tetramers; dsDNA enters through RuvA and exits via RuvB. An RuvB hexamer assembles on each DNA strand where it exits the tetramer. Each RuvB hexamer is contacted by two RuvA subunits (via domain III) on 2 adjacent RuvB subunits; this complex drives branch migration. In the full resolvosome a probable DNA-RuvA(4)-RuvB(12)-RuvC(2) complex forms which resolves the HJ.

Its subcellular location is the cytoplasm. Its function is as follows. The RuvA-RuvB-RuvC complex processes Holliday junction (HJ) DNA during genetic recombination and DNA repair, while the RuvA-RuvB complex plays an important role in the rescue of blocked DNA replication forks via replication fork reversal (RFR). RuvA specifically binds to HJ cruciform DNA, conferring on it an open structure. The RuvB hexamer acts as an ATP-dependent pump, pulling dsDNA into and through the RuvAB complex. HJ branch migration allows RuvC to scan DNA until it finds its consensus sequence, where it cleaves and resolves the cruciform DNA. The polypeptide is Holliday junction branch migration complex subunit RuvA (Streptococcus pneumoniae serotype 19F (strain G54)).